The following is a 268-amino-acid chain: 4-hydroxy-tetrahydrodipicolinate reductase (268 aa).

NAD(+) is bound by residues 10 to 15, E36, 99 to 101, and 123 to 126; these read GSTGRM, GTT, and APNM. H156 (proton donor/acceptor) is an active-site residue. H157 serves as a coordination point for (S)-2,3,4,5-tetrahydrodipicolinate. K160 serves as the catalytic Proton donor. 166–167 lines the (S)-2,3,4,5-tetrahydrodipicolinate pocket; the sequence is GT.

This sequence belongs to the DapB family.

It localises to the cytoplasm. It catalyses the reaction (S)-2,3,4,5-tetrahydrodipicolinate + NAD(+) + H2O = (2S,4S)-4-hydroxy-2,3,4,5-tetrahydrodipicolinate + NADH + H(+). The enzyme catalyses (S)-2,3,4,5-tetrahydrodipicolinate + NADP(+) + H2O = (2S,4S)-4-hydroxy-2,3,4,5-tetrahydrodipicolinate + NADPH + H(+). It participates in amino-acid biosynthesis; L-lysine biosynthesis via DAP pathway; (S)-tetrahydrodipicolinate from L-aspartate: step 4/4. Functionally, catalyzes the conversion of 4-hydroxy-tetrahydrodipicolinate (HTPA) to tetrahydrodipicolinate. The chain is 4-hydroxy-tetrahydrodipicolinate reductase from Nitrosomonas europaea (strain ATCC 19718 / CIP 103999 / KCTC 2705 / NBRC 14298).